Reading from the N-terminus, the 177-residue chain is Cytochrome c-type biogenesis protein CcmE (177 aa).

The Cytoplasmic portion of the chain corresponds to 1–8 (MNPRRKSR). The helical; Signal-anchor for type II membrane protein transmembrane segment at 9–29 (LKVVMAVLSGLAVAVGLTLYA) threads the bilayer. The Periplasmic portion of the chain corresponds to 30-177 (LSQNIDLFYT…QISQPFGENK (148 aa)). Residues H131 and Y135 each coordinate heme. A disordered region spans residues 134–177 (NYMPPELGDQMKKQHQPMGISEADLKGKSERDATQISQPFGENK). The segment covering 156–166 (ADLKGKSERDA) has biased composition (basic and acidic residues). Polar residues predominate over residues 167-177 (TQISQPFGENK).

It belongs to the CcmE/CycJ family.

It is found in the cell inner membrane. Functionally, heme chaperone required for the biogenesis of c-type cytochromes. Transiently binds heme delivered by CcmC and transfers the heme to apo-cytochromes in a process facilitated by CcmF and CcmH. This chain is Cytochrome c-type biogenesis protein CcmE, found in Glaesserella parasuis serovar 5 (strain SH0165) (Haemophilus parasuis).